Consider the following 285-residue polypeptide: Probable endonuclease 4 (285 aa).

Residues histidine 69, histidine 109, glutamate 145, aspartate 179, histidine 182, histidine 216, aspartate 229, histidine 231, and glutamate 261 each contribute to the Zn(2+) site.

It belongs to the AP endonuclease 2 family. The cofactor is Zn(2+).

It catalyses the reaction Endonucleolytic cleavage to 5'-phosphooligonucleotide end-products.. Its function is as follows. Endonuclease IV plays a role in DNA repair. It cleaves phosphodiester bonds at apurinic or apyrimidinic (AP) sites, generating a 3'-hydroxyl group and a 5'-terminal sugar phosphate. This is Probable endonuclease 4 from Salmonella paratyphi C (strain RKS4594).